A 367-amino-acid polypeptide reads, in one-letter code: Alginate lyase (367 aa).

The N-terminal stretch at Met-1–Ala-27 is a signal peptide. Substrate contacts are provided by residues Ser-65–Lys-66, His-138–Thr-139, and Tyr-256.

It belongs to the polysaccharide lyase 5 family.

It is found in the periplasm. The catalysed reaction is Eliminative cleavage of alginate to give oligosaccharides with 4-deoxy-alpha-L-erythro-hex-4-enuronosyl groups at their non-reducing ends and beta-D-mannuronate at their reducing end.. Catalyzes the depolymerization of alginate by cleaving the beta-1,4 glycosidic bond between two adjacent sugar residues via a beta-elimination mechanism. May serve to degrade mislocalized alginate that is trapped in the periplasmic space. Acts preferentially on non-acetylated alginate or its precursor mannuronan. Is able to catalyze cleavage adjacent to either mannuronate or guluronate residues in alginate. Exhaustive digestion of alginate by AlgL generates dimeric and trimeric products. In addition to its enzymatic function, AlgL appears to be required for alginate export, maybe as part of a multi-protein alginate-secretion complex. This Pseudomonas aeruginosa (strain ATCC 15692 / DSM 22644 / CIP 104116 / JCM 14847 / LMG 12228 / 1C / PRS 101 / PAO1) protein is Alginate lyase.